The sequence spans 506 residues: Probable Xaa-Pro aminopeptidase PADG_06815 (506 aa).

4 residues coordinate Mn(2+): aspartate 285, aspartate 296, glutamate 433, and glutamate 471.

The protein belongs to the peptidase M24B family. Mn(2+) serves as cofactor.

The catalysed reaction is Release of any N-terminal amino acid, including proline, that is linked to proline, even from a dipeptide or tripeptide.. Catalyzes the removal of a penultimate prolyl residue from the N-termini of peptides. This chain is Probable Xaa-Pro aminopeptidase PADG_06815, found in Paracoccidioides brasiliensis (strain Pb18).